A 186-amino-acid polypeptide reads, in one-letter code: uncharacterized protein (186 aa).

3 helical membrane-spanning segments follow: residues 43–63 (GAWVIHIVLIAALRLIFHAIP), 69–89 (LAWTLTNLTYMAGSFIMFHWV), and 143–163 (WMFLVNIWALFMVLIPKLPAV).

The protein localises to the endoplasmic reticulum membrane. This is an uncharacterized protein from Schizosaccharomyces pombe (strain 972 / ATCC 24843) (Fission yeast).